The primary structure comprises 417 residues: NADH-quinone oxidoreductase subunit D (417 aa).

Belongs to the complex I 49 kDa subunit family. NDH-1 is composed of 14 different subunits. Subunits NuoB, C, D, E, F, and G constitute the peripheral sector of the complex.

It localises to the cell inner membrane. It carries out the reaction a quinone + NADH + 5 H(+)(in) = a quinol + NAD(+) + 4 H(+)(out). NDH-1 shuttles electrons from NADH, via FMN and iron-sulfur (Fe-S) centers, to quinones in the respiratory chain. The immediate electron acceptor for the enzyme in this species is believed to be ubiquinone. Couples the redox reaction to proton translocation (for every two electrons transferred, four hydrogen ions are translocated across the cytoplasmic membrane), and thus conserves the redox energy in a proton gradient. This Nitrosomonas eutropha (strain DSM 101675 / C91 / Nm57) protein is NADH-quinone oxidoreductase subunit D.